Reading from the N-terminus, the 142-residue chain is Nucleoside diphosphate kinase (142 aa).

Lys-11, Phe-59, Arg-87, Thr-93, Arg-104, and Asn-114 together coordinate ATP. His-117 acts as the Pros-phosphohistidine intermediate in catalysis.

The protein belongs to the NDK family. As to quaternary structure, homotetramer. Requires Mg(2+) as cofactor.

It is found in the cytoplasm. The enzyme catalyses a 2'-deoxyribonucleoside 5'-diphosphate + ATP = a 2'-deoxyribonucleoside 5'-triphosphate + ADP. It carries out the reaction a ribonucleoside 5'-diphosphate + ATP = a ribonucleoside 5'-triphosphate + ADP. Major role in the synthesis of nucleoside triphosphates other than ATP. The ATP gamma phosphate is transferred to the NDP beta phosphate via a ping-pong mechanism, using a phosphorylated active-site intermediate. The polypeptide is Nucleoside diphosphate kinase (Yersinia pseudotuberculosis serotype I (strain IP32953)).